The sequence spans 705 residues: 1,4-alpha-glucan branching enzyme GlgB (705 aa).

The active-site Nucleophile is the Asp393. Glu446 acts as the Proton donor in catalysis.

This sequence belongs to the glycosyl hydrolase 13 family. GlgB subfamily. In terms of assembly, monomer.

It carries out the reaction Transfers a segment of a (1-&gt;4)-alpha-D-glucan chain to a primary hydroxy group in a similar glucan chain.. Its pathway is glycan biosynthesis; glycogen biosynthesis. Its function is as follows. Catalyzes the formation of the alpha-1,6-glucosidic linkages in glycogen by scission of a 1,4-alpha-linked oligosaccharide from growing alpha-1,4-glucan chains and the subsequent attachment of the oligosaccharide to the alpha-1,6 position. The sequence is that of 1,4-alpha-glucan branching enzyme GlgB from Picrophilus torridus (strain ATCC 700027 / DSM 9790 / JCM 10055 / NBRC 100828 / KAW 2/3).